Consider the following 142-residue polypeptide: MAAGGSDPRSGDVEEDASQLIFPKEFETAETLLNSEVHMLLEHRKQQNESAEDEQELSEVFMKTLNYTARFSRFKNRETIASVRSLLLQKKLHKFELACLANLCPETAEESKALIPSLEGRFEDEELQQILDDIQTKRSFQY.

The protein belongs to the eukaryotic RPB4 RNA polymerase subunit family. As to quaternary structure, component of the RNA polymerase II (Pol II) core complex consisting of 12 subunits: a ten-subunit catalytic core composed of POLR2A/RPB1, POLR2B/RPB2, POLR2C/RPB3, POLR2I/RPB9, POLR2J/RPB11, POLR2E/RPABC1, POLR2F/RPABC2, POLR2H/RPABC3, POLR2K/RPABC4 and POLR2L/RPABC5 and a mobile stalk composed of two subunits POLR2D/RPB4 and POLR2G/RPB7, protruding from the core and functioning primarily in transcription initiation. Part of Pol II(G) complex, in which Pol II core associates with an additional subunit POLR2M; unlike conventional Pol II, Pol II(G) functions as a transcriptional repressor. Part of Pol II pre-initiation complex (PIC), in which Pol II core assembles with Mediator, general transcription factors and other specific initiation factors including GTF2E1, GTF2E2, GTF2F1, GTF2F2, TCEA1, ERCC2, ERCC3, GTF2H2, GTF2H3, GTF2H4, GTF2H5, GTF2A1, GTF2A2, GTF2B and TBP; this large multi-subunit PIC complex mediates DNA unwinding and targets Pol II core to the transcription start site where the first phosphodiester bond forms.

It localises to the nucleus. Its function is as follows. Core component of RNA polymerase II (Pol II), a DNA-dependent RNA polymerase which synthesizes mRNA precursors and many functional non-coding RNAs using the four ribonucleoside triphosphates as substrates. Pol II is the central component of the basal RNA polymerase II transcription machinery. It is composed of mobile elements that move relative to each other. POLR2D/RPB4 is part of a subcomplex with POLR2G/RPB7 that binds to a pocket formed by POLR2A/RPB1, POLR2B/RPB2 and POLR2F/RPABC2 at the base of the clamp element. The POLR2D/RPB4-POLR2G/RPB7 subcomplex seems to lock the clamp via POLR2G/RPB7 in the closed conformation thus preventing double-stranded DNA to enter the active site cleft. The POLR2D/RPB4-POLR2G/RPB7 subcomplex binds single-stranded DNA and RNA. This is DNA-directed RNA polymerase II subunit RPB4 (POLR2D) from Bos taurus (Bovine).